The primary structure comprises 306 residues: Ribonuclease Z (306 aa).

Residues H62, H64, D66, H67, H138, D209, and H267 each contribute to the Zn(2+) site. The active-site Proton acceptor is D66.

Belongs to the RNase Z family. As to quaternary structure, homodimer. Zn(2+) is required as a cofactor.

It catalyses the reaction Endonucleolytic cleavage of RNA, removing extra 3' nucleotides from tRNA precursor, generating 3' termini of tRNAs. A 3'-hydroxy group is left at the tRNA terminus and a 5'-phosphoryl group is left at the trailer molecule.. Zinc phosphodiesterase, which displays some tRNA 3'-processing endonuclease activity. Probably involved in tRNA maturation, by removing a 3'-trailer from precursor tRNA. In Archaeoglobus fulgidus (strain ATCC 49558 / DSM 4304 / JCM 9628 / NBRC 100126 / VC-16), this protein is Ribonuclease Z.